The chain runs to 637 residues: MSIITTAFALSLLATTAFAVPPETPRIELQAERGLGDQSYAPWQVDCPSNVTWIRNATTGLGTGERAYIEAREKLVQPAIEQMMAARGLETPPRTPVIGVALAGGGYRAMLTGLGGIMGMMNESTEASQSETGGWLDGVSYWSGLSGGSWATGSFMSNGGQLPTTLLENLWNIDSNLVFPDDGKLSFYTNLYTETNAKSDLGFPVQITDIWGLAIGSHVLPEPYQLSNTPNLTFSSLPSVVAALGNASLPMPIIVAADRKRREAGELVIAENATVWEFTPYEFGSWAFGSQYKSPGAFTPIEYLGTSVDDGSPNGTCWKGFDQLSFVMGTSATLFNGAFLELNGTDSGLLTNLITAFLADLGEDQADISRIPNSFSNYNSGENPIYNLTYITLVDAGETNQNIPLEPLLVPTRDVDAIVAFDSSYDSDYIWPNGTALRTTYERAKILAEHENTRVLMPEVPSMNGFVNGGYNSRPTFFGCNDTTTPVIIYIPSYPWSFAANTSTYQLSYENNEANEMLLNGMRSLTLNHSVPTWPTCFACALTDRSFMYTSENRSTTCQECFDTWCWAGDDNTTEPANYEPVINSVPPWLIANNLSIGMADAPGSNESTAGTASSGAAKMGVGMGMVALTAGLGLML.

Positions 1-19 (MSIITTAFALSLLATTAFA) are cleaved as a signal peptide. The PLA2c domain maps to 46-572 (DCPSNVTWIR…DTWCWAGDDN (527 aa)). Asn-50, Asn-56, Asn-122, Asn-231, Asn-246, Asn-272, Asn-314, Asn-343, Asn-387, Asn-433, Asn-481, Asn-501, Asn-528, Asn-553, Asn-572, Asn-594, and Asn-606 each carry an N-linked (GlcNAc...) asparagine glycan.

The protein belongs to the lysophospholipase family. In terms of processing, N-glycosylated.

It localises to the secreted. The enzyme catalyses a 1-acyl-sn-glycero-3-phosphocholine + H2O = sn-glycerol 3-phosphocholine + a fatty acid + H(+). Functionally, exhibits phospholipase B (PLB), lysophospholipase (LPL) and lysophospholipase/transacylase (LPTA) activities. The protein is Phospholipase B (PLB1) of Cryptococcus neoformans var. neoformans serotype D (strain B-3501A) (Filobasidiella neoformans).